We begin with the raw amino-acid sequence, 155 residues long: Protein SREK1IP1 (155 aa).

Residues 13–30 (AGCKKCGYPGHLTFECRN) form a CCHC-type zinc finger. The interval 43–155 (DVSSTSTEDS…SSSSQSSSSD (113 aa)) is disordered. The segment covering 58 to 74 (EVARAPADKKNVTDTGK) has biased composition (basic and acidic residues). Basic residues predominate over residues 75-93 (KKLKRKKEKKLKKHRKRLH). Residues 94–103 (SSSESDDNSK) show a composition bias toward basic and acidic residues. The span at 104 to 137 (AKKRKSQKKEKRVKHKAKKGKQHKKDKRKEKRER) shows a compositional bias: basic residues. The span at 140–155 (SSSSSSSSSSQSSSSD) shows a compositional bias: low complexity.

In terms of biological role, possible splicing regulator involved in the control of cellular survival. This Xenopus tropicalis (Western clawed frog) protein is Protein SREK1IP1 (srek1ip1).